A 102-amino-acid polypeptide reads, in one-letter code: UPF0122 protein MPN_424 (102 aa).

This sequence belongs to the UPF0122 family.

In terms of biological role, might take part in the signal recognition particle (SRP) pathway. This is inferred from the conservation of its genetic proximity to ftsY/ffh. May be a regulatory protein. The polypeptide is UPF0122 protein MPN_424 (Mycoplasma pneumoniae (strain ATCC 29342 / M129 / Subtype 1) (Mycoplasmoides pneumoniae)).